We begin with the raw amino-acid sequence, 1755 residues long: Transposon Ty1-LR2 Gag-Pol polyprotein (1755 aa).

Polar residues-rich tracts occupy residues 1-23, 48-60, and 127-152; these read MESQ…SVTS, TKAN…TPAS, and QSQF…GNTF. 3 disordered regions span residues 1 to 93, 126 to 174, and 352 to 421; these read MESQ…MMTQ, PQSQ…PPPM, and GSRN…SKST. Over residues 153–165 the composition is skewed to low complexity; it reads TDSSSADSDMTST. The RNA-binding stretch occupies residues 299 to 401; that stretch reads NNGIHINNKV…NSKSKTARAH (103 aa). Positions 402–418 are enriched in low complexity; that stretch reads NVSTSNNSPSTDNDSIS. Serine 416 bears the Phosphoserine mark. Residue aspartate 461 is the For protease activity; shared with dimeric partner of the active site. An integrase-type zinc finger-like region spans residues 583–640; that stretch reads NVHTSESTRKYPYPFIHRMLAHANAPTIRYSLKNNTITYFNESDVDWSSAIDYQCPDC. The region spanning 660-835 is the Integrase catalytic domain; sequence NSYEPFQYLH…AGLDISTLLP (176 aa). The Mg(2+) site is built by aspartate 671 and aspartate 736. 3 disordered regions span residues 956 to 1087, 1092 to 1111, and 1130 to 1187; these read SKAV…ETEK, RSPS…NIVP, and DLPL…DNET. Residues 960-969 are compositionally biased toward low complexity; sequence SPTDSTPPST. Residues 1005 to 1015 show a composition bias toward polar residues; it reads STPQISNIEST. A compositionally biased stretch (basic and acidic residues) spans 1038–1053; it reads ESSHASKSKDFRHSDS. Polar residues-rich tracts occupy residues 1054 to 1082 and 1101 to 1111; these read YSEN…QISD and PENNSSHNIVP. Positions 1178-1212 match the Bipartite nuclear localization signal motif; it reads KKRSLEDNETEIKVSRDTWNTKNMRSLEPPRSKKR. The Reverse transcriptase Ty1/copia-type domain occupies 1338-1476; sequence NNYYITQLDI…DILGLEIKYQ (139 aa). Mg(2+) contacts are provided by aspartate 1346, aspartate 1427, aspartate 1428, aspartate 1610, glutamate 1652, and aspartate 1685. The 143-residue stretch at 1610–1752 folds into the RNase H Ty1/copia-type domain; sequence DASYGNQPYY…IKTFKLLTNK (143 aa).

The capsid protein forms a homotrimer, from which the VLPs are assembled. The protease is a homodimer, whose active site consists of two apposed aspartic acid residues. Post-translationally, initially, virus-like particles (VLPs) are composed of the structural unprocessed proteins Gag and Gag-Pol, and also contain the host initiator methionine tRNA (tRNA(i)-Met) which serves as a primer for minus-strand DNA synthesis, and a dimer of genomic Ty RNA. Processing of the polyproteins occurs within the particle and proceeds by an ordered pathway, called maturation. First, the protease (PR) is released by autocatalytic cleavage of the Gag-Pol polyprotein yielding capsid protein p45 and a Pol-p154 precursor protein. This cleavage is a prerequisite for subsequent processing of Pol-p154 at the remaining sites to release the mature structural and catalytic proteins. Maturation takes place prior to the RT reaction and is required to produce transposition-competent VLPs.

Its subcellular location is the cytoplasm. It localises to the nucleus. The enzyme catalyses DNA(n) + a 2'-deoxyribonucleoside 5'-triphosphate = DNA(n+1) + diphosphate. The catalysed reaction is Endonucleolytic cleavage to 5'-phosphomonoester.. Its function is as follows. Capsid protein (CA) is the structural component of the virus-like particle (VLP), forming the shell that encapsulates the retrotransposons dimeric RNA genome. The particles are assembled from trimer-clustered units and there are holes in the capsid shells that allow for the diffusion of macromolecules. CA also has nucleocapsid-like chaperone activity, promoting primer tRNA(i)-Met annealing to the multipartite primer-binding site (PBS), dimerization of Ty1 RNA and initiation of reverse transcription. In terms of biological role, the aspartyl protease (PR) mediates the proteolytic cleavages of the Gag and Gag-Pol polyproteins after assembly of the VLP. Reverse transcriptase/ribonuclease H (RT) is a multifunctional enzyme that catalyzes the conversion of the retro-elements RNA genome into dsDNA within the VLP. The enzyme displays a DNA polymerase activity that can copy either DNA or RNA templates, and a ribonuclease H (RNase H) activity that cleaves the RNA strand of RNA-DNA heteroduplexes during plus-strand synthesis and hydrolyzes RNA primers. The conversion leads to a linear dsDNA copy of the retrotransposon that includes long terminal repeats (LTRs) at both ends. Functionally, integrase (IN) targets the VLP to the nucleus, where a subparticle preintegration complex (PIC) containing at least integrase and the newly synthesized dsDNA copy of the retrotransposon must transit the nuclear membrane. Once in the nucleus, integrase performs the integration of the dsDNA into the host genome. The polypeptide is Transposon Ty1-LR2 Gag-Pol polyprotein (TY1B-LR2) (Saccharomyces cerevisiae (strain ATCC 204508 / S288c) (Baker's yeast)).